The chain runs to 349 residues: DCD domain-containing protein NRP (349 aa).

Residues 157-201 form a disordered region; it reads NNNKNKGIDEDHQIQKGGKKNRKNQQNNNNQRNEDDKNNGLDKRF. Residues 188–201 show a composition bias toward basic and acidic residues; sequence RNEDDKNNGLDKRF. The DCD domain maps to 214 to 346; sequence ETIGGYIFVC…VLSLLDIFAD (133 aa).

As to quaternary structure, interacts with CRY2 in the cytoplasm. Interacts with Verticillium dahliae PevD1. Interacts with FYPP3. As to expression, highly expressed in sensecent leaves, cauline leaves and sepals. Expressed in the shoot apical meristem, leaf veins, central cylinder, root hair zone, root tips, rosette leaves, flowers and siliques.

The protein resides in the cytoplasm. Functionally, contributes to the initial phase of responses to abiotic and biotic stress signals. Binds FYPP3 and facilitates FYPP3 degradation to promote abscisic acid (ABA) response. The sequence is that of DCD domain-containing protein NRP from Arabidopsis thaliana (Mouse-ear cress).